The primary structure comprises 304 residues: uncharacterized protein (304 aa).

Transmembrane regions (helical) follow at residues 5–25, 42–62, 68–88, 96–116, 120–140, 150–170, 178–198, 215–235, 245–265, and 268–288; these read TIIL…FIAI, FLLA…PLLF, IFQL…ILYG, IASV…FIFF, LYFF…IILF, TIKG…IYLY, ISIL…FLVI, ILAT…SYFY, ASTI…FVWG, and IGID…ITIF. EamA domains lie at 16–140 and 162–288; these read ITWG…IILF and TSHA…ITIF.

It belongs to the EamA transporter family.

The protein resides in the cell membrane. This is an uncharacterized protein from Buchnera aphidicola subsp. Schlechtendalia chinensis.